Here is a 180-residue protein sequence, read N- to C-terminus: NAD(P)H-quinone oxidoreductase subunit I, chloroplastic (180 aa).

2 consecutive 4Fe-4S ferredoxin-type domains span residues 55 to 84 (GRIH…VDWR) and 95 to 124 (LNYS…MTEE). Residues C64, C67, C70, C74, C104, C107, C110, and C114 each coordinate [4Fe-4S] cluster.

This sequence belongs to the complex I 23 kDa subunit family. As to quaternary structure, NDH is composed of at least 16 different subunits, 5 of which are encoded in the nucleus. It depends on [4Fe-4S] cluster as a cofactor.

The protein resides in the plastid. The protein localises to the chloroplast thylakoid membrane. The catalysed reaction is a plastoquinone + NADH + (n+1) H(+)(in) = a plastoquinol + NAD(+) + n H(+)(out). The enzyme catalyses a plastoquinone + NADPH + (n+1) H(+)(in) = a plastoquinol + NADP(+) + n H(+)(out). In terms of biological role, NDH shuttles electrons from NAD(P)H:plastoquinone, via FMN and iron-sulfur (Fe-S) centers, to quinones in the photosynthetic chain and possibly in a chloroplast respiratory chain. The immediate electron acceptor for the enzyme in this species is believed to be plastoquinone. Couples the redox reaction to proton translocation, and thus conserves the redox energy in a proton gradient. In Triticum aestivum (Wheat), this protein is NAD(P)H-quinone oxidoreductase subunit I, chloroplastic.